Reading from the N-terminus, the 398-residue chain is Cysteine desulfurase 2 (398 aa).

Residues 71-72 (GT), N150, Q178, and 198-200 (SGH) contribute to the pyridoxal 5'-phosphate site. K201 carries the N6-(pyridoxal phosphate)lysine modification. Pyridoxal 5'-phosphate is bound at residue T236. The active-site Cysteine persulfide intermediate is C323. [2Fe-2S] cluster is bound at residue C323.

It belongs to the class-V pyridoxal-phosphate-dependent aminotransferase family. NifS/IscS subfamily. In terms of assembly, homodimer. Pyridoxal 5'-phosphate is required as a cofactor.

It catalyses the reaction (sulfur carrier)-H + L-cysteine = (sulfur carrier)-SH + L-alanine. Its function is as follows. Catalyzes the removal of elemental sulfur atoms from cysteine to produce alanine. Seems to participate in the biosynthesis of the nitrogenase metalloclusters by providing the inorganic sulfur required for the Fe-S core formation. The protein is Cysteine desulfurase 2 of Trichormus variabilis (strain ATCC 29413 / PCC 7937) (Anabaena variabilis).